We begin with the raw amino-acid sequence, 172 residues long: S-ribosylhomocysteine lyase (172 aa).

Positions 54, 58, and 128 each coordinate Fe cation.

This sequence belongs to the LuxS family. Homodimer. It depends on Fe cation as a cofactor.

The enzyme catalyses S-(5-deoxy-D-ribos-5-yl)-L-homocysteine = (S)-4,5-dihydroxypentane-2,3-dione + L-homocysteine. Functionally, involved in the synthesis of autoinducer 2 (AI-2) which is secreted by bacteria and is used to communicate both the cell density and the metabolic potential of the environment. The regulation of gene expression in response to changes in cell density is called quorum sensing. Catalyzes the transformation of S-ribosylhomocysteine (RHC) to homocysteine (HC) and 4,5-dihydroxy-2,3-pentadione (DPD). The protein is S-ribosylhomocysteine lyase of Photobacterium profundum (strain SS9).